We begin with the raw amino-acid sequence, 477 residues long: Ribulose bisphosphate carboxylase large chain (477 aa).

The propeptide occupies 1–2; that stretch reads MS. Position 3 is an N-acetylproline (proline 3). Lysine 14 is subject to N6,N6,N6-trimethyllysine. Substrate is bound by residues asparagine 123 and threonine 173. Lysine 175 acts as the Proton acceptor in catalysis. A substrate-binding site is contributed by lysine 177. 3 residues coordinate Mg(2+): lysine 201, aspartate 203, and glutamate 204. Position 201 is an N6-carboxylysine (lysine 201). The active-site Proton acceptor is the histidine 294. 3 residues coordinate substrate: arginine 295, histidine 327, and serine 379.

This sequence belongs to the RuBisCO large chain family. Type I subfamily. Heterohexadecamer of 8 large chains and 8 small chains; disulfide-linked. The disulfide link is formed within the large subunit homodimers. Mg(2+) serves as cofactor. The disulfide bond which can form in the large chain dimeric partners within the hexadecamer appears to be associated with oxidative stress and protein turnover.

Its subcellular location is the plastid. The protein resides in the chloroplast. The catalysed reaction is 2 (2R)-3-phosphoglycerate + 2 H(+) = D-ribulose 1,5-bisphosphate + CO2 + H2O. The enzyme catalyses D-ribulose 1,5-bisphosphate + O2 = 2-phosphoglycolate + (2R)-3-phosphoglycerate + 2 H(+). Functionally, ruBisCO catalyzes two reactions: the carboxylation of D-ribulose 1,5-bisphosphate, the primary event in carbon dioxide fixation, as well as the oxidative fragmentation of the pentose substrate in the photorespiration process. Both reactions occur simultaneously and in competition at the same active site. In Solanum lycopersicum (Tomato), this protein is Ribulose bisphosphate carboxylase large chain (rbcL).